Reading from the N-terminus, the 192-residue chain is uncharacterized protein (192 aa).

The region spanning 29-160 is the Nudix hydrolase domain; that stretch reads HRQAAVLIPI…PLDIYRRGDS (132 aa). Positions 67–89 match the Nudix box motif; the sequence is GAVDDTDASVIAAALREAEEEVA. Mg(2+) is bound by residues E83 and E87.

Belongs to the Nudix hydrolase family. PCD1 subfamily. Mn(2+) serves as cofactor. The cofactor is Mg(2+).

Its function is as follows. Probably mediates the hydrolysis of some nucleoside diphosphate derivatives. This is an uncharacterized protein from Escherichia coli O139:H28 (strain E24377A / ETEC).